We begin with the raw amino-acid sequence, 278 residues long: 3-methyl-2-oxobutanoate hydroxymethyltransferase (278 aa).

The Mg(2+) site is built by aspartate 52 and aspartate 91. 3-methyl-2-oxobutanoate contacts are provided by residues 52 to 53 (DS), aspartate 91, and lysine 121. Residue glutamate 123 participates in Mg(2+) binding. Glutamate 190 acts as the Proton acceptor in catalysis.

Belongs to the PanB family. As to quaternary structure, homodecamer; pentamer of dimers. Mg(2+) serves as cofactor.

It is found in the cytoplasm. It catalyses the reaction 3-methyl-2-oxobutanoate + (6R)-5,10-methylene-5,6,7,8-tetrahydrofolate + H2O = 2-dehydropantoate + (6S)-5,6,7,8-tetrahydrofolate. It functions in the pathway cofactor biosynthesis; (R)-pantothenate biosynthesis; (R)-pantoate from 3-methyl-2-oxobutanoate: step 1/2. Functionally, catalyzes the reversible reaction in which hydroxymethyl group from 5,10-methylenetetrahydrofolate is transferred onto alpha-ketoisovalerate to form ketopantoate. The sequence is that of 3-methyl-2-oxobutanoate hydroxymethyltransferase from Rhodospirillum rubrum (strain ATCC 11170 / ATH 1.1.1 / DSM 467 / LMG 4362 / NCIMB 8255 / S1).